A 1218-amino-acid chain; its full sequence is Mgp-operon protein 3 (1218 aa).

The N-terminal stretch at 1–25 is a signal peptide; it reads MKSKLKLKRYLLFLPLLPLGTLSLA. Disordered stretches follow at residues 109–129, 213–245, 262–353, and 411–440; these read QESQ…SGSN, HFGS…GFKL, EPLD…AVVS, and QDAT…PALT. Over residues 116–129 the composition is skewed to low complexity; the sequence is NGSQSGSSDTSGSN. Polar residues predominate over residues 217–231; sequence GQESSWNSQRSQKGL. Basic and acidic residues predominate over residues 265-286; sequence DSTKEGKGKDESSWKNSEKTTA. Positions 301–342 are enriched in low complexity; it reads AGSASSLQGNGSNSSGLKSLLRSAPVSVPPSSTSNQTLSLSN. Positions 411 to 428 are enriched in polar residues; that stretch reads QDATSTNLPHAAGASQTG. A helical transmembrane segment spans residues 1121–1141; sequence VGSSVGILLILLILGLGIGIP. The span at 1192–1204 shows a compositional bias: low complexity; the sequence is NNAAPKAPVKPAA. The interval 1192-1218 is disordered; the sequence is NNAAPKAPVKPAAPTAPRPPVQPPKKA. Residues 1205–1218 are compositionally biased toward pro residues; it reads PTAPRPPVQPPKKA.

It localises to the cell membrane. In Mycoplasma pneumoniae (strain ATCC 29342 / M129 / Subtype 1) (Mycoplasmoides pneumoniae), this protein is Mgp-operon protein 3.